A 293-amino-acid chain; its full sequence is Glutamyl-Q tRNA(Asp) synthetase (293 aa).

Residues 8 to 12 and Glu44 each bind L-glutamate; that span reads RFAPT. Positions 11-21 match the 'HIGH' region motif; the sequence is PTPSGYLHFGS. Positions 100, 102, 114, and 118 each coordinate Zn(2+). Positions 171 and 189 each coordinate L-glutamate. The 'KMSKS' region motif lies at 227–231; it reads KLGKS. Lys230 is a binding site for ATP.

The protein belongs to the class-I aminoacyl-tRNA synthetase family. GluQ subfamily. Requires Zn(2+) as cofactor.

Functionally, catalyzes the tRNA-independent activation of glutamate in presence of ATP and the subsequent transfer of glutamate onto a tRNA(Asp). Glutamate is transferred on the 2-amino-5-(4,5-dihydroxy-2-cyclopenten-1-yl) moiety of the queuosine in the wobble position of the QUC anticodon. The polypeptide is Glutamyl-Q tRNA(Asp) synthetase (Pseudomonas aeruginosa (strain LESB58)).